A 163-amino-acid chain; its full sequence is Nucleotide-binding protein YajQ (163 aa).

The protein belongs to the YajQ family.

Nucleotide-binding protein. The sequence is that of Nucleotide-binding protein YajQ from Escherichia coli O127:H6 (strain E2348/69 / EPEC).